The following is a 20-amino-acid chain: Elastase (20 aa).

In terms of domain architecture, Peptidase S1 spans V1–Y20.

The protein belongs to the peptidase S1 family. Elastase subfamily.

Functionally, digests most rapidly at the C-terminal side of alanine residues, but also cleaves at valine and leucine residues. The polypeptide is Elastase (Gadus morhua (Atlantic cod)).